The sequence spans 293 residues: Ribosomal protein L11 methyltransferase (293 aa).

Residues Thr-145, Gly-166, Asp-188, and Asn-230 each coordinate S-adenosyl-L-methionine.

The protein belongs to the methyltransferase superfamily. PrmA family.

It is found in the cytoplasm. It catalyses the reaction L-lysyl-[protein] + 3 S-adenosyl-L-methionine = N(6),N(6),N(6)-trimethyl-L-lysyl-[protein] + 3 S-adenosyl-L-homocysteine + 3 H(+). Its function is as follows. Methylates ribosomal protein L11. This is Ribosomal protein L11 methyltransferase from Klebsiella pneumoniae subsp. pneumoniae (strain ATCC 700721 / MGH 78578).